The following is a 698-amino-acid chain: Topoisomerase subunit TopoN (698 aa).

Lys-429 is covalently cross-linked (Isoglutamyl lysine isopeptide (Lys-Gln) (interchain with Q-Cter in protein Pup)). The disordered stretch occupies residues Gly-443–Ser-473. The Toprim domain maps to Ala-479 to Pro-593.

This sequence belongs to the type II topoisomerase family. A complex of TopoN and TopoM, possibly a heterotetramer. Mg(2+) serves as cofactor.

It catalyses the reaction ATP-dependent breakage, passage and rejoining of double-stranded DNA.. Its activity is regulated as follows. Inhibited by quinolone antibiotic ciprofloxacin and coumarin antibiotic novobiocin, but at much higher concentrations than is usual for DNA gyrase/topoisomerase. Functionally, catalyzes the relaxation of negatively supercoiled DNA in the presence of ATP or dATP but not other nucleotides. Individual subunits have no activity. Not able to negatively supercoil DNA, it can however introduce positive supercoils in DNA. Relaxes positive supercoils in an ATP-dependent manner. Catenates and decatenates DNA. Generates dsDNA breaks in the presence of the quinolone antibiotic ciprofloxacin, showing it is a topoisomerase. The polypeptide is Topoisomerase subunit TopoN (Mycolicibacterium smegmatis (strain ATCC 700084 / mc(2)155) (Mycobacterium smegmatis)).